The following is a 77-amino-acid chain: Acyl carrier protein (77 aa).

Positions 2-77 constitute a Carrier domain; the sequence is SDVAEKVKKI…DAIAYIEEKK (76 aa). An O-(pantetheine 4'-phosphoryl)serine modification is found at serine 37.

The protein belongs to the acyl carrier protein (ACP) family. Post-translationally, 4'-phosphopantetheine is transferred from CoA to a specific serine of apo-ACP by AcpS. This modification is essential for activity because fatty acids are bound in thioester linkage to the sulfhydryl of the prosthetic group.

The protein localises to the cytoplasm. The protein operates within lipid metabolism; fatty acid biosynthesis. In terms of biological role, carrier of the growing fatty acid chain in fatty acid biosynthesis. The sequence is that of Acyl carrier protein from Desulfovibrio desulfuricans (strain ATCC 27774 / DSM 6949 / MB).